The sequence spans 45 residues: Large ribosomal subunit protein bL34 (45 aa).

Positions 1 to 10 (MTQRTLGGTN) are enriched in polar residues. Positions 1-45 (MTQRTLGGTNRKQKRTSGFRARMRKSNGRKVIQARRKKGRHRLSV) are disordered. A compositionally biased stretch (basic residues) spans 11–45 (RKQKRTSGFRARMRKSNGRKVIQARRKKGRHRLSV).

It belongs to the bacterial ribosomal protein bL34 family.

This is Large ribosomal subunit protein bL34 from Crocosphaera subtropica (strain ATCC 51142 / BH68) (Cyanothece sp. (strain ATCC 51142)).